We begin with the raw amino-acid sequence, 637 residues long: Chaperone protein HtpG (637 aa).

Residues 1–345 (MSQQETHGFQ…SNDLPLNVSR (345 aa)) form an a; substrate-binding region. A b region spans residues 346–562 (EILQDNHITK…EGEMSSQMIK (217 aa)). The interval 563–637 (LMQAAGQPVP…MNQMLLANLK (75 aa)) is c.

It belongs to the heat shock protein 90 family. In terms of assembly, homodimer.

Its subcellular location is the cytoplasm. In terms of biological role, molecular chaperone. Has ATPase activity. The chain is Chaperone protein HtpG from Shewanella sp. (strain MR-4).